Consider the following 163-residue polypeptide: 2-C-methyl-D-erythritol 2,4-cyclodiphosphate synthase (163 aa).

Residues Asp12 and His14 each contribute to the a divalent metal cation site. 4-CDP-2-C-methyl-D-erythritol 2-phosphate-binding positions include 12–14 (DVH) and 38–39 (HS). His46 is an a divalent metal cation binding site. 4-CDP-2-C-methyl-D-erythritol 2-phosphate-binding positions include 60-62 (DIG), 136-139 (TTSE), Phe143, and Arg146.

The protein belongs to the IspF family. Homotrimer. A divalent metal cation serves as cofactor.

It carries out the reaction 4-CDP-2-C-methyl-D-erythritol 2-phosphate = 2-C-methyl-D-erythritol 2,4-cyclic diphosphate + CMP. It functions in the pathway isoprenoid biosynthesis; isopentenyl diphosphate biosynthesis via DXP pathway; isopentenyl diphosphate from 1-deoxy-D-xylulose 5-phosphate: step 4/6. Involved in the biosynthesis of isopentenyl diphosphate (IPP) and dimethylallyl diphosphate (DMAPP), two major building blocks of isoprenoid compounds. Catalyzes the conversion of 4-diphosphocytidyl-2-C-methyl-D-erythritol 2-phosphate (CDP-ME2P) to 2-C-methyl-D-erythritol 2,4-cyclodiphosphate (ME-CPP) with a corresponding release of cytidine 5-monophosphate (CMP). This is 2-C-methyl-D-erythritol 2,4-cyclodiphosphate synthase from Xanthomonas campestris pv. campestris (strain 8004).